We begin with the raw amino-acid sequence, 371 residues long: Methionine import ATP-binding protein MetN (371 aa).

The region spanning 29–270 (IRIEGVRKVY…PRHEVTRRFV (242 aa)) is the ABC transporter domain. 67–74 (GRSGAGKS) is an ATP binding site.

Belongs to the ABC transporter superfamily. Methionine importer (TC 3.A.1.24) family. In terms of assembly, the complex is composed of two ATP-binding proteins (MetN), two transmembrane proteins (MetI) and a solute-binding protein (MetQ).

It localises to the cell inner membrane. It carries out the reaction L-methionine(out) + ATP + H2O = L-methionine(in) + ADP + phosphate + H(+). It catalyses the reaction D-methionine(out) + ATP + H2O = D-methionine(in) + ADP + phosphate + H(+). Functionally, part of the ABC transporter complex MetNIQ involved in methionine import. Responsible for energy coupling to the transport system. This Rhodopseudomonas palustris (strain BisA53) protein is Methionine import ATP-binding protein MetN.